Consider the following 347-residue polypeptide: Violet-sensitive opsin (347 aa).

The Extracellular segment spans residues 1 to 31 (MLEEEDFYLFKNVSNVSPFDGPQYHIAPKWA). An N-linked (GlcNAc...) asparagine glycan is attached at Asn-12. The chain crosses the membrane as a helical span at residues 32–56 (FTLQAIFMGMVFLIGTPLNFIVLLV). Residues 57-68 (TIKYKKLRQPLN) are Cytoplasmic-facing. A helical membrane pass occupies residues 69 to 94 (YILVNITVGGFLMCIFSIFPVFVSSS). The Extracellular portion of the chain corresponds to 95 to 108 (QGYFFFGRIACSID). Cysteines 105 and 182 form a disulfide. The helical transmembrane segment at 109–128 (AFVGTLTGLVTGWSLAFLAF) threads the bilayer. Residues 129 to 147 (ERYIVICKPMGNFNFSSSH) are Cytoplasmic-facing. A helical membrane pass occupies residues 148-171 (ALAVVICTWIIGIVVSVPPFLGWS). Topologically, residues 172-197 (RYMPEGLQCSCGPDWYTVGTKYRSEY) are extracellular. The chain crosses the membrane as a helical span at residues 198 to 225 (YTWFIFIFCFVIPLSLICFSYGRLLGAL). At 226 to 247 (RAVAAQQQESASTQKAEREVSR) the chain is on the cytoplasmic side. The chain crosses the membrane as a helical span at residues 248–271 (MVIFMVGSFCLCYVPYAAMAMYMV). Over 272-279 (TNRNHGLD) the chain is Extracellular. A helical transmembrane segment spans residues 280–304 (LRLVTIPAFFSKSSCVYNPIIYSFM). N6-(retinylidene)lysine is present on Lys-291. Residues 305 to 347 (NKQFRGCIMETVCGRPMSDDSSVSSTSQRTEVSTVSSSQVSPA) lie on the Cytoplasmic side of the membrane. Residues 323–347 (DDSSVSSTSQRTEVSTVSSSQVSPA) form a disordered region.

It belongs to the G-protein coupled receptor 1 family. Opsin subfamily. Phosphorylated on some or all of the serine and threonine residues present in the C-terminal region. The color pigments are found in the cone photoreceptor cells.

It is found in the membrane. Functionally, visual pigments are the light-absorbing molecules that mediate vision. They consist of an apoprotein, opsin, covalently linked to cis-retinal. This is Violet-sensitive opsin from Xenopus laevis (African clawed frog).